Here is a 724-residue protein sequence, read N- to C-terminus: N-alpha-acetyltransferase 35, NatC auxiliary subunit (724 aa).

Belongs to the MAK10 family. As to quaternary structure, component of the N-terminal acetyltransferase C (NatC) complex.

It is found in the cytoplasm. Auxillary component of the N-terminal acetyltransferase C (NatC) complex which catalyzes acetylation of N-terminal methionine residues. N-terminal acetylation protects proteins from ubiquitination and degradation by the N-end rule pathway. Regulates cell proliferation during embryonic development. The chain is N-alpha-acetyltransferase 35, NatC auxiliary subunit (naa35) from Danio rerio (Zebrafish).